The chain runs to 196 residues: Pyridoxal 5'-phosphate synthase subunit PdxT (196 aa).

47 to 49 contributes to the L-glutamine binding site; it reads GES. Catalysis depends on Cys79, which acts as the Nucleophile. L-glutamine-binding positions include Arg106 and 134 to 135; that span reads IR. Active-site charge relay system residues include His170 and Glu172.

Belongs to the glutaminase PdxT/SNO family. As to quaternary structure, in the presence of PdxS, forms a dodecamer of heterodimers. Only shows activity in the heterodimer.

It carries out the reaction aldehydo-D-ribose 5-phosphate + D-glyceraldehyde 3-phosphate + L-glutamine = pyridoxal 5'-phosphate + L-glutamate + phosphate + 3 H2O + H(+). The catalysed reaction is L-glutamine + H2O = L-glutamate + NH4(+). Its pathway is cofactor biosynthesis; pyridoxal 5'-phosphate biosynthesis. Catalyzes the hydrolysis of glutamine to glutamate and ammonia as part of the biosynthesis of pyridoxal 5'-phosphate. The resulting ammonia molecule is channeled to the active site of PdxS. The protein is Pyridoxal 5'-phosphate synthase subunit PdxT of Bacillus cereus (strain B4264).